The sequence spans 203 residues: Flagellar transcriptional regulator FlhC (203 aa).

Zn(2+)-binding residues include cysteine 161, cysteine 164, cysteine 181, and cysteine 184.

It belongs to the FlhC family. Heterohexamer composed of two FlhC and four FlhD subunits. Each FlhC binds a FlhD dimer, forming a heterotrimer, and a hexamer assembles by dimerization of two heterotrimers. Zn(2+) serves as cofactor.

The protein resides in the cytoplasm. In terms of biological role, functions in complex with FlhD as a master transcriptional regulator that regulates transcription of several flagellar and non-flagellar operons by binding to their promoter region. Activates expression of class 2 flagellar genes, including fliA, which is a flagellum-specific sigma factor that turns on the class 3 genes. Also regulates genes whose products function in a variety of physiological pathways. The polypeptide is Flagellar transcriptional regulator FlhC (Cupriavidus necator (strain ATCC 17699 / DSM 428 / KCTC 22496 / NCIMB 10442 / H16 / Stanier 337) (Ralstonia eutropha)).